Consider the following 91-residue polypeptide: Small ribosomal subunit protein uS19 (91 aa).

The protein belongs to the universal ribosomal protein uS19 family.

Its function is as follows. Protein S19 forms a complex with S13 that binds strongly to the 16S ribosomal RNA. The sequence is that of Small ribosomal subunit protein uS19 from Pseudomonas fluorescens (strain Pf0-1).